We begin with the raw amino-acid sequence, 239 residues long: DNA repair protein RecO (239 aa).

Belongs to the RecO family.

Functionally, involved in DNA repair and RecF pathway recombination. The protein is DNA repair protein RecO of Cereibacter sphaeroides (strain KD131 / KCTC 12085) (Rhodobacter sphaeroides).